The following is a 579-amino-acid chain: Arginine--tRNA ligase (579 aa).

The 'HIGH' region motif lies at Pro-123–His-133.

It belongs to the class-I aminoacyl-tRNA synthetase family. As to quaternary structure, monomer.

It is found in the cytoplasm. It carries out the reaction tRNA(Arg) + L-arginine + ATP = L-arginyl-tRNA(Arg) + AMP + diphosphate. The chain is Arginine--tRNA ligase from Cellvibrio japonicus (strain Ueda107) (Pseudomonas fluorescens subsp. cellulosa).